Reading from the N-terminus, the 178-residue chain is UPF0302 protein Bcer98_1244 (178 aa).

Belongs to the UPF0302 family.

This chain is UPF0302 protein Bcer98_1244, found in Bacillus cytotoxicus (strain DSM 22905 / CIP 110041 / 391-98 / NVH 391-98).